Here is a 264-residue protein sequence, read N- to C-terminus: Short chain dehydrogenase/reductase dmxR18 (264 aa).

Positions 24, 70, 97, and 130 each coordinate NADP(+). Catalysis depends on proton donor residues Ser146 and Ser147. The NADP(+) site is built by Tyr161, Lys165, and Thr196. The active-site Proton acceptor is Tyr161. The active-site Lowers pKa of active site Tyr is the Lys165.

The protein belongs to the short-chain dehydrogenases/reductases (SDR) family.

The enzyme catalyses 3,8,9,10-tetrahydroxy-6-methyl-1,4-dihydroanthracen-1-one + NADPH + H(+) = (3R)-3,8,9,10-tetrahydroxy-6-methyl-1,2,3,4-tetrahydroanthracen-1-one + NADP(+). It participates in secondary metabolite biosynthesis. Its function is as follows. Short chain dehydrogenase/reductase; part of the gene cluster that mediates the biosynthesis of the dimeric xanthones cryptosporioptides. The pathway begins with the synthesis of atrochrysone thioester by the polyketide synthase dmx-nrPKS. The atrochrysone carboxyl ACP thioesterase dmxR1 then breaks the thioester bond and releases the atrochrysone carboxylic acid from dmx-nrPKS. Atrochrysone carboxylic acid is decarboxylated by the decarboxylase dmxR15, and oxidized by the anthrone oxygenase dmxR16 to yield emodin. Emodin is then reduced to emodin hydroquinone by the oxidoreductase dmxR7. A-ring reduction by the short chain dehydrogenase dmxR18, dehydration by the scytalone dehydratase-like protein dmxR17 and probable spontaneous re-oxidation, results in overall deoxygenation to chrysophanol. Baeyer-Villiger oxidation by the Baeyer-Villiger monooxygenase (BVMO) dmxR6 then yields monodictylactone in equilibrium with monodictyphenone. In the case of the cryptosporioptides biosynthesis, monodictylactone is reduced at C-12 to an alcohol (by the short chain dehydrogenases dmxR12 or dmxR8) and hydroxylated at C-5 by dmxR9, yielding the electron-rich aromatic which could eliminate H(2)O to form the ortho-quinonemethide, followed by tautomerisation to paraquinone and complete the formal reduction to produce the 10-methylgroup. Conjugate addition of C-4a-OH to the resulting paraquinone by the monooxygenase dmxR10 then gives cyclohexadienone, which is then reduced at C-5 by the short chain dehydrogenase dmxR3 to give the dihydroxanthone. The 6,7-epoxide in the cryptosporioptides could be introduced by the cytochrome P450 monooxygenase dmxL3. The highly reducing PKS dmxL2 manufactures butyrate, which is further carboxylated by dmxL1 to form ethylmalonate. It is not yet clear whether the carboxylation occurs while the butyrate is attached to the ACP of dmxL2, but this unusual fungal metabolite could then be esterified to O-5 by the O-acetyltransferase dmxR13. Finally, dimerization performed by dmxR5 gives the observed dimers cryptosporioptides A, B and C as the final products of the pathway. This chain is Short chain dehydrogenase/reductase dmxR18, found in Cryptosporiopsis sp. (strain 8999).